The following is a 164-amino-acid chain: Phosphopantetheine adenylyltransferase (164 aa).

Ser-10 contributes to the substrate binding site. ATP is bound by residues 10-11 (SF) and His-18. Substrate contacts are provided by Lys-42, Thr-79, and Arg-93. ATP is bound by residues 94–96 (GLR), Glu-104, and 129–135 (VRPIAAT).

This sequence belongs to the bacterial CoaD family. As to quaternary structure, homohexamer. Mg(2+) is required as a cofactor.

The protein localises to the cytoplasm. The enzyme catalyses (R)-4'-phosphopantetheine + ATP + H(+) = 3'-dephospho-CoA + diphosphate. It participates in cofactor biosynthesis; coenzyme A biosynthesis; CoA from (R)-pantothenate: step 4/5. In terms of biological role, reversibly transfers an adenylyl group from ATP to 4'-phosphopantetheine, yielding dephospho-CoA (dPCoA) and pyrophosphate. In Bradyrhizobium sp. (strain BTAi1 / ATCC BAA-1182), this protein is Phosphopantetheine adenylyltransferase.